Reading from the N-terminus, the 473-residue chain is ATP synthase subunit beta (473 aa).

158–165 (GGAGVGKT) lines the ATP pocket.

This sequence belongs to the ATPase alpha/beta chains family. As to quaternary structure, F-type ATPases have 2 components, CF(1) - the catalytic core - and CF(0) - the membrane proton channel. CF(1) has five subunits: alpha(3), beta(3), gamma(1), delta(1), epsilon(1). CF(0) has three main subunits: a(1), b(2) and c(9-12). The alpha and beta chains form an alternating ring which encloses part of the gamma chain. CF(1) is attached to CF(0) by a central stalk formed by the gamma and epsilon chains, while a peripheral stalk is formed by the delta and b chains.

The protein localises to the cell membrane. It catalyses the reaction ATP + H2O + 4 H(+)(in) = ADP + phosphate + 5 H(+)(out). Functionally, produces ATP from ADP in the presence of a proton gradient across the membrane. The catalytic sites are hosted primarily by the beta subunits. This is ATP synthase subunit beta from Bacillus caldotenax.